The following is a 195-amino-acid chain: Probable prefoldin subunit 3 (195 aa).

It belongs to the prefoldin subunit alpha family. As to quaternary structure, heterohexamer of two PFD-alpha type and four PFD-beta type subunits.

In terms of biological role, binds specifically to cytosolic chaperonin (c-CPN) and transfers target proteins to it. Binds to nascent polypeptide chain and promotes folding in an environment in which there are many competing pathways for nonnative proteins. The sequence is that of Probable prefoldin subunit 3 (pfdn3) from Dictyostelium discoideum (Social amoeba).